Reading from the N-terminus, the 538-residue chain is GSY2-interacting protein PIG2 (538 aa).

Residues serine 162, serine 196, serine 296, and serine 304 each carry the phosphoserine modification. The CBM21 domain occupies 384–508; sequence LNLSRGRPVF…NNDSANYKID (125 aa).

Interacts with glycogen synthase 2 (GSY2); possibly also interacts with phosphatase 1 (GLC7). In Saccharomyces cerevisiae (strain ATCC 204508 / S288c) (Baker's yeast), this protein is GSY2-interacting protein PIG2 (PIG2).